A 328-amino-acid polypeptide reads, in one-letter code: L-lactate dehydrogenase (328 aa).

Residues Val-18, Glu-39, Lys-46, Tyr-71, and 85–86 contribute to the NAD(+) site; that span reads GA. Positions 88 and 94 each coordinate substrate. NAD(+) contacts are provided by residues Ser-107, 124 to 126, and Ser-149; that span reads AAN. 126–129 contributes to the substrate binding site; sequence NPVD. Substrate is bound at residue 154-157; that stretch reads DSAR. Beta-D-fructose 1,6-bisphosphate contacts are provided by Arg-159 and His-174. Residue His-181 is the Proton acceptor of the active site. Tyr-226 carries the phosphotyrosine modification. Thr-235 serves as a coordination point for substrate.

This sequence belongs to the LDH/MDH superfamily. LDH family. Homotetramer.

The protein localises to the cytoplasm. The enzyme catalyses (S)-lactate + NAD(+) = pyruvate + NADH + H(+). Its pathway is fermentation; pyruvate fermentation to lactate; (S)-lactate from pyruvate: step 1/1. Its activity is regulated as follows. Allosterically activated by fructose 1,6-bisphosphate (FBP). Its function is as follows. Catalyzes the conversion of lactate to pyruvate. The chain is L-lactate dehydrogenase from Streptococcus sanguinis (strain SK36).